We begin with the raw amino-acid sequence, 460 residues long: ERAD-associated E3 ubiquitin-protein ligase HRD1B (460 aa).

Over 1–3 (MIQ) the chain is Cytoplasmic. Residues 4–24 (LKVYAGLSTLATLVVIYHAFS) traverse the membrane as a helical segment. Topologically, residues 25–40 (SRGQFYPATVYLSTSK) are lumenal. The helical transmembrane segment at 41-61 (INLVVLLNMGLVLMLSLWNLV) threads the bilayer. Residues 62 to 98 (KIVFLGSLREAEVERLNEQAWRELMEILFAITIFRQD) are Cytoplasmic-facing. The chain crosses the membrane as a helical span at residues 99–119 (FSVGFISLVVTLLLIKGLHWM). Residues 120 to 140 (AQKRVEYIETTPSVTLLSHVR) are Lumenal-facing. Residues 141-161 (IVSFMVFLLILDCLLTYSSIQ) traverse the membrane as a helical segment. Topologically, residues 162–170 (QLIQSRKAS) are cytoplasmic. A helical membrane pass occupies residues 171-191 (MSVFFTFEYMILATTTVSIIV). Over 192-225 (KYAFYVTDMLKEGQWEGKPVYTFYLELVRDLLHL) the chain is Lumenal. The chain crosses the membrane as a helical span at residues 226–246 (SMYLCFFLMIFMNYGLPLHLI). At 247–460 (RELYETFRNF…TKGKSVADTA (214 aa)) the chain is on the cytoplasmic side. The RING-type; atypical zinc finger occupies 292–330 (CIICREEMTSAKKLVCGHLFHVHCLRSWLERQNTCPTCR). A disordered region spans residues 339-378 (ATSTASGNRGPHQESLQQGTGTSSSDGQGSSVSAAASENM). Positions 353 to 375 (SLQQGTGTSSSDGQGSSVSAAAS) are enriched in low complexity.

It belongs to the HRD1 family.

The protein resides in the endoplasmic reticulum membrane. It catalyses the reaction S-ubiquitinyl-[E2 ubiquitin-conjugating enzyme]-L-cysteine + [acceptor protein]-L-lysine = [E2 ubiquitin-conjugating enzyme]-L-cysteine + N(6)-ubiquitinyl-[acceptor protein]-L-lysine.. Its pathway is protein modification; protein ubiquitination. Probable component of the HRD1 ubiquitin ligase complex that mediates the rapid degradation of misfolded endoplasmic reticulum (ER) proteins, a process called ER-associated degradation (ERAD). Targets the misfolded LRR receptor kinase BRI1. Functions redundantly with HRD3A. This chain is ERAD-associated E3 ubiquitin-protein ligase HRD1B, found in Arabidopsis thaliana (Mouse-ear cress).